The chain runs to 314 residues: N-alpha-acetyltransferase 80 (314 aa).

One can recognise an N-acetyltransferase domain in the interval 90–243; it reads LEPVHCRPEL…TTVLRAFSKP (154 aa). Substrate-binding positions include Arg113 and 118-121; that span reads RLHS. Acetyl-CoA is bound by residues 169–171, 177–182, and Gln207; these read VVV and GRGFGR. The tract at residues 260 to 295 is disordered; it reads VPRSSKGPPLPPPPPLPQSLTASPPPSPEPLPQSPL. Residues 267 to 292 are compositionally biased toward pro residues; it reads PPLPPPPPLPQSLTASPPPSPEPLPQ.

This sequence belongs to the acetyltransferase family.

It is found in the cytoplasm. It localises to the cytosol. It carries out the reaction N-terminal L-aspartyl-L-aspartyl-L-aspartyl-[protein] + acetyl-CoA = N-terminal N-acetyl-L-aspartyl-L-aspartyl-L-aspartyl-[protein] + CoA + H(+). It catalyses the reaction N-terminal L-glutamyl-L-glutamyl-L-glutamyl-[protein] + acetyl-CoA = N-terminal N-acetyl-L-glutamyl-L-glutamyl-L-glutamyl-[protein] + CoA + H(+). Functionally, N-alpha-acetyltransferase that specifically mediates the acetylation of the acidic amino terminus of processed forms of beta- and gamma-actin (ACTB and ACTG, respectively). N-terminal acetylation of processed beta- and gamma-actin regulates actin filament depolymerization and elongation. In vivo, preferentially displays N-terminal acetyltransferase activity towards acid N-terminal sequences starting with Asp-Asp-Asp and Glu-Glu-Glu. In vitro, shows high activity towards Met-Asp-Glu-Leu and Met-Asp-Asp-Asp. May act as a tumor suppressor. The sequence is that of N-alpha-acetyltransferase 80 from Mus musculus (Mouse).